A 380-amino-acid polypeptide reads, in one-letter code: Lipid-A-disaccharide synthase (380 aa).

The protein belongs to the LpxB family.

It catalyses the reaction a lipid X + a UDP-2-N,3-O-bis[(3R)-3-hydroxyacyl]-alpha-D-glucosamine = a lipid A disaccharide + UDP + H(+). Its pathway is bacterial outer membrane biogenesis; LPS lipid A biosynthesis. Functionally, condensation of UDP-2,3-diacylglucosamine and 2,3-diacylglucosamine-1-phosphate to form lipid A disaccharide, a precursor of lipid A, a phosphorylated glycolipid that anchors the lipopolysaccharide to the outer membrane of the cell. This chain is Lipid-A-disaccharide synthase, found in Pseudomonas syringae pv. syringae (strain B728a).